A 221-amino-acid chain; its full sequence is LHFPL tetraspan subfamily member 5 protein (221 aa).

Residues 1–24 are Cytoplasmic-facing; it reads MPKLLPAQEAARIYHTNYVRNARA. A helical membrane pass occupies residues 25–45; sequence MGVLWALFTLCFSILMVVTFI. Residues 46–98 are Extracellular-facing; that stretch reads QPYWIGDSIDTPQAGYFGLFSYCIGNALTGELICKGSPLDFGTIPSSAFKTAM. Residues 99 to 119 form a helical membrane-spanning segment; that stretch reads FFVGISTFLIIGSILCFSLFF. At 120–128 the chain is on the cytoplasmic side; sequence FCNAATVYK. Residues 129–149 form a helical membrane-spanning segment; the sequence is VCAWMQLAAATGLMIGCLIYP. Residues 150–179 lie on the Extracellular side of the membrane; sequence DGWDSSEVKRMCGDKTDKYTLGACTVRWAY. The chain crosses the membrane as a helical span at residues 180–200; it reads ILCIIGILDALILSFLAFVLG. Topologically, residues 201-221 are cytoplasmic; sequence NRQDNLLPSDFKVESKEEGNE.

The protein belongs to the LHFP family.

It localises to the cell membrane. Its function is as follows. Probable component of the mechanotransducer (MET) non-specific cation channel complex. This Gallus gallus (Chicken) protein is LHFPL tetraspan subfamily member 5 protein.